Here is a 175-residue protein sequence, read N- to C-terminus: MNNLDISFNDEVNFLKDSDKDWITWISNLLLSAKKEIHKENTQEMSINFVSSKKIHEINKKYRGKDRPTDVISFAIEDGLDEDFISAFSDDPDFVEDIGDLFLCPEVIKRHSVEYETGFNREFGYTLVHGYLHLNGYDHIEDDEAKVMFGIQGKVLREYGLPLHPDQENHGKQIH.

Zn(2+) contacts are provided by histidine 129, histidine 133, and histidine 139.

Belongs to the endoribonuclease YbeY family. The cofactor is Zn(2+).

The protein resides in the cytoplasm. Single strand-specific metallo-endoribonuclease involved in late-stage 70S ribosome quality control and in maturation of the 3' terminus of the 16S rRNA. The polypeptide is Endoribonuclease YbeY (Lactobacillus johnsonii (strain CNCM I-12250 / La1 / NCC 533)).